We begin with the raw amino-acid sequence, 1418 residues long: Protein ced-11 (1418 aa).

The next 7 helical transmembrane spans lie at 617–637, 755–775, 782–802, 818–838, 856–876, 898–918, and 986–1006; these read FPIF…IIPV, YWLS…SVVL, LWDT…CFVL, VFDV…KVFP, VVSA…YIPL, FLFM…AVVF, and IVIE…FAFF.

The protein resides in the membrane. In terms of biological role, plays a major role in programmed cell death. In Caenorhabditis elegans, this protein is Protein ced-11 (ced-11).